We begin with the raw amino-acid sequence, 144 residues long: Neuritin-B (144 aa).

The N-terminal stretch at Met1–Ala27 is a signal peptide. Ser114 carries the GPI-anchor amidated serine lipid modification. Positions Thr115–Gln144 are cleaved as a propeptide — removed in mature form.

It belongs to the neuritin family.

It is found in the cell membrane. Its function is as follows. Modulates postsynaptic dendritic arbor elaboration and synaptic maturation. In Xenopus laevis (African clawed frog), this protein is Neuritin-B (nrn1-b).